Here is a 467-residue protein sequence, read N- to C-terminus: 5'-nucleotidase domain-containing protein 1 (467 aa).

Asp-16 acts as the Nucleophile in catalysis. Mg(2+) is bound by residues Asp-16 and Asp-18. Asp-18 functions as the Proton donor in the catalytic mechanism. Lys-181 is subject to N6-acetyllysine. Asp-323 provides a ligand contact to Mg(2+).

It belongs to the 5'(3')-deoxyribonucleotidase family.

This is 5'-nucleotidase domain-containing protein 1 (Nt5dc1) from Mus musculus (Mouse).